The chain runs to 361 residues: Large-conductance mechanosensitive channel MscMJLR (361 aa).

5 consecutive transmembrane segments (helical) span residues 20–40 (ILSLISIILFIVIGKYANALI), 65–85 (LPVAIAIILSGFYFGVNFLYL), 89–109 (LKTAVNEGILTAFILCVVVFF), 137–157 (IVVLTKKLVRLVVWVVGLLLI), and 177–197 (LAVALASQNLVSNLIAGLIIL).

The protein belongs to the MscS (TC 1.A.23) family.

The protein localises to the cell membrane. Functionally, large-conductance mechanosensitive channel that opens in response to stretch forces in the membrane lipid bilayer. Selective for cations. Rectifies with voltage. This is Large-conductance mechanosensitive channel MscMJLR from Methanocaldococcus jannaschii (strain ATCC 43067 / DSM 2661 / JAL-1 / JCM 10045 / NBRC 100440) (Methanococcus jannaschii).